Consider the following 172-residue polypeptide: Single-stranded DNA-binding protein 2 (172 aa).

An SSB domain is found at 6 to 111 (VNKVILVGHI…VIVNVGGTMQ (106 aa)). Residues 55–61 (WHRVVVF) mediate DNA binding. Residues 113-172 (LGRHNSQPQQEPQTPPTAAKGEGKAVKGAGNAAKGKNAAAPQQPPAQPDPAYDFDDDIPF) form a disordered region. Over residues 119-153 (QPQQEPQTPPTAAKGEGKAVKGAGNAAKGKNAAAP) the composition is skewed to low complexity. The Important for interaction with partner proteins signature appears at 167–172 (DDDIPF).

As to quaternary structure, homotetramer.

In terms of biological role, plays an important role in DNA replication, recombination and repair. Binds to ssDNA and to an array of partner proteins to recruit them to their sites of action during DNA metabolism. The protein is Single-stranded DNA-binding protein 2 (ssb2) of Salmonella typhimurium (strain LT2 / SGSC1412 / ATCC 700720).